The chain runs to 335 residues: tRNA N6-adenosine threonylcarbamoyltransferase (335 aa).

A divalent metal cation-binding residues include His-109, His-113, and Tyr-130. Substrate contacts are provided by residues 130–134, Asp-162, Gly-177, Glu-181, and Asn-266; that span reads YVSGG. Position 294 (Asp-294) interacts with a divalent metal cation.

The protein belongs to the KAE1 / TsaD family. In terms of assembly, component of the EKC/KEOPS complex composed of at least tp53rk, tprkb, osgep and lage3; the whole complex dimerizes. A divalent metal cation serves as cofactor.

It localises to the cytoplasm. The protein resides in the nucleus. The catalysed reaction is L-threonylcarbamoyladenylate + adenosine(37) in tRNA = N(6)-L-threonylcarbamoyladenosine(37) in tRNA + AMP + H(+). In terms of biological role, component of the EKC/KEOPS complex that is required for the formation of a threonylcarbamoyl group on adenosine at position 37 (t(6)A37) in tRNAs that read codons beginning with adenine. The complex is probably involved in the transfer of the threonylcarbamoyl moiety of threonylcarbamoyl-AMP (TC-AMP) to the N6 group of A37. Osgep likely plays a direct catalytic role in this reaction, but requires other protein(s) of the complex to fulfill this activity. The sequence is that of tRNA N6-adenosine threonylcarbamoyltransferase from Xenopus laevis (African clawed frog).